Reading from the N-terminus, the 331-residue chain is MMFPSLLAPPAVYPNLLRPTPTLTLPQSIQTALSNHTSFLIEDLIRISRPAGFLPRAVPPPSMSPPTSESPNCMSETSDLARREGPNQTSISSNNSSPFLKFGVNAILSSSPRTESAQVLLPSAHPKPFTFPYFEGSFQPFIRSSYFPASSSVVPIPGTFSWPLVARGKPRRGMLRRAVFSDVQRKALEKMFQKQKYISKPDRKKLAGKLGLKDSQVKIWFQNRRMKWRNSKERELLSSGGCREQTLPTKFNPHPDLSDVSKKSSGEGEEEPLCPGNSPAHALPYQCPEHHLRLDTQLPSSPFNSSSASKPSDFSDSEEEGGEQEEEITVS.

Disordered regions lie at residues 56–94 (RAVP…ISSN) and 232–331 (KERE…ITVS). The homeobox DNA-binding region spans 173 to 232 (GMLRRAVFSDVQRKALEKMFQKQKYISKPDRKKLAGKLGLKDSQVKIWFQNRRMKWRNSK). The span at 256–266 (DLSDVSKKSSG) shows a compositional bias: basic and acidic residues. A compositionally biased stretch (low complexity) spans 299–314 (PSSPFNSSSASKPSDF). The segment covering 315–331 (SDSEEEGGEQEEEITVS) has biased composition (acidic residues).

The protein belongs to the H2.0 homeobox family.

The protein resides in the nucleus. May function within the midpoint progenitor population to inhibit neuronal differentiation, possibly through modulating the function of Xash3. This is Homeobox protein DBX1 (dbx1) from Xenopus laevis (African clawed frog).